Consider the following 114-residue polypeptide: Small ribosomal subunit protein bS16 (114 aa).

This sequence belongs to the bacterial ribosomal protein bS16 family.

This is Small ribosomal subunit protein bS16 from Prochlorococcus marinus subsp. pastoris (strain CCMP1986 / NIES-2087 / MED4).